Reading from the N-terminus, the 258-residue chain is TLC domain-containing protein 4-A (258 aa).

The next 6 helical transmembrane spans lie at 5 to 25 (LISY…FSAI), 52 to 72 (FVST…LAYD), 85 to 105 (FWVK…LLLL), 116 to 132 (YMVC…GYVL), 171 to 191 (PVLL…IAVI), and 212 to 232 (IGPQ…NVFW). One can recognise a TLC domain in the interval 43–245 (GKQCEWDSRF…IARGFYKVVK (203 aa)).

This sequence belongs to the TLCD4 family.

The protein resides in the membrane. The polypeptide is TLC domain-containing protein 4-A (tlcd4-a) (Xenopus laevis (African clawed frog)).